The primary structure comprises 286 residues: Movement protein (286 aa).

The protein belongs to the tenuiviruses pc4 protein family. Interacts with the rice proteins DJA6 and HSP17.9A.

The protein resides in the host cytoplasm. Functionally, transports viral genome to neighboring plant cells directly through plasmosdesmata, without any budding. The movement protein allows efficient cell to cell propagation, by bypassing the host cell wall barrier. In Avena sativa (Oat), this protein is Movement protein.